A 161-amino-acid chain; its full sequence is Protein-export protein SecB (161 aa).

The protein belongs to the SecB family. As to quaternary structure, homotetramer, a dimer of dimers. One homotetramer interacts with 1 SecA dimer.

It localises to the cytoplasm. One of the proteins required for the normal export of preproteins out of the cell cytoplasm. It is a molecular chaperone that binds to a subset of precursor proteins, maintaining them in a translocation-competent state. It also specifically binds to its receptor SecA. The protein is Protein-export protein SecB of Coxiella burnetii (strain CbuG_Q212) (Coxiella burnetii (strain Q212)).